The primary structure comprises 80 residues: Small pacifastin protease inhibitor (80 aa).

Positions 1–24 are cleaved as a signal peptide; the sequence is MSKVLKVGLLLLLVAVAASAYAVA. A propeptide spanning residues 25 to 47 is cleaved from the precursor; sequence EENGAPKENKQLPQIDDYGVTNK. Residues 45–80 enclose the Pacifastin domain; that stretch reads TNKCPANQPFKWNCNYCTCGPEGKDASCTRMACPQH. 3 cysteine pairs are disulfide-bonded: cysteine 48–cysteine 63, cysteine 58–cysteine 77, and cysteine 61–cysteine 72.

Belongs to the protease inhibitor I19 family. As to expression, expressed in the venom apparatus. Low transcript levels are also detected in other tissues.

Its subcellular location is the secreted. Its function is as follows. Parasitic wasp protein that may interfere with the host immune response. The recombinant protein inhibits trypsin activity and prophenoloxidase (PPO) activation, an enzyme essential for both clotting and insect innate immune responses. It does not inhibit activity of chymotrypsin and protease K, and has no effect on phenoloxidase (PO) activity. The chain is Small pacifastin protease inhibitor from Nasonia vitripennis (Parasitic wasp).